Here is a 122-residue protein sequence, read N- to C-terminus: Large ribosomal subunit protein uL14 (122 aa).

This sequence belongs to the universal ribosomal protein uL14 family. Part of the 50S ribosomal subunit. Forms a cluster with proteins L3 and L19. In the 70S ribosome, L14 and L19 interact and together make contacts with the 16S rRNA in bridges B5 and B8.

Functionally, binds to 23S rRNA. Forms part of two intersubunit bridges in the 70S ribosome. The protein is Large ribosomal subunit protein uL14 of Micrococcus luteus (strain ATCC 4698 / DSM 20030 / JCM 1464 / CCM 169 / CCUG 5858 / IAM 1056 / NBRC 3333 / NCIMB 9278 / NCTC 2665 / VKM Ac-2230) (Micrococcus lysodeikticus).